Here is a 143-residue protein sequence, read N- to C-terminus: Large ribosomal subunit protein uL11 (143 aa).

It belongs to the universal ribosomal protein uL11 family. As to quaternary structure, part of the ribosomal stalk of the 50S ribosomal subunit. Interacts with L10 and the large rRNA to form the base of the stalk. L10 forms an elongated spine to which L12 dimers bind in a sequential fashion forming a multimeric L10(L12)X complex. One or more lysine residues are methylated.

Its function is as follows. Forms part of the ribosomal stalk which helps the ribosome interact with GTP-bound translation factors. The sequence is that of Large ribosomal subunit protein uL11 from Delftia acidovorans (strain DSM 14801 / SPH-1).